The following is a 421-amino-acid chain: Plant UBX domain-containing protein 5 (421 aa).

The UBA domain maps to 4-45 (ETNENLINSFIEITSSSREEANFFLESHTWNLDAAVSTFLDN). 2 disordered regions span residues 46-171 (DAAA…MMVQ) and 292-338 (ENFT…PSRG). Residues 69–84 (QSPSQSHSPDYTPSET) show a composition bias toward polar residues. The span at 85–102 (SPSPSRSRSASPSSRAAP) shows a compositional bias: low complexity. Positions 231 to 295 (RIMHTITFWL…DLVRRGENFT (65 aa)) constitute an SEP domain. The span at 312–328 (GASGSGSSSAPQASSAP) shows a compositional bias: low complexity. Residues 343-420 (PAAPTTSIQL…GIANAVVIQK (78 aa)) enclose the UBX domain.

In terms of assembly, interacts with CDC48A (non-hexameric) via its UBX domain.

The protein is Plant UBX domain-containing protein 5 of Arabidopsis thaliana (Mouse-ear cress).